The chain runs to 430 residues: Adenylosuccinate synthetase (430 aa).

Residues G13–K19 and G41–T43 each bind GTP. Residue D14 is the Proton acceptor of the active site. 2 residues coordinate Mg(2+): D14 and G41. Residues D14–K17, N39–H42, T130, R144, Q225, T240, and R304 contribute to the IMP site. H42 acts as the Proton donor in catalysis. A300 to R306 is a binding site for substrate. GTP contacts are provided by residues R306, K332 to D334, and S414 to G416.

Belongs to the adenylosuccinate synthetase family. Homodimer. The cofactor is Mg(2+).

It localises to the cytoplasm. It catalyses the reaction IMP + L-aspartate + GTP = N(6)-(1,2-dicarboxyethyl)-AMP + GDP + phosphate + 2 H(+). The protein operates within purine metabolism; AMP biosynthesis via de novo pathway; AMP from IMP: step 1/2. Plays an important role in the de novo pathway of purine nucleotide biosynthesis. Catalyzes the first committed step in the biosynthesis of AMP from IMP. The chain is Adenylosuccinate synthetase from Xanthomonas oryzae pv. oryzae (strain MAFF 311018).